A 344-amino-acid polypeptide reads, in one-letter code: Protein RecA (344 aa).

An ATP-binding site is contributed by 66-73 (GPESSGKT).

It belongs to the RecA family.

It is found in the cytoplasm. Can catalyze the hydrolysis of ATP in the presence of single-stranded DNA, the ATP-dependent uptake of single-stranded DNA by duplex DNA, and the ATP-dependent hybridization of homologous single-stranded DNAs. It interacts with LexA causing its activation and leading to its autocatalytic cleavage. This is Protein RecA from Azoarcus sp. (strain BH72).